The sequence spans 275 residues: 3-methyl-2-oxobutanoate hydroxymethyltransferase (275 aa).

D55 and D94 together coordinate Mg(2+). 3-methyl-2-oxobutanoate contacts are provided by residues 55 to 56 (DS), D94, and K123. Mg(2+) is bound at residue E125. Catalysis depends on E192, which acts as the Proton acceptor.

The protein belongs to the PanB family. Homodecamer; pentamer of dimers. It depends on Mg(2+) as a cofactor.

Its subcellular location is the cytoplasm. The enzyme catalyses 3-methyl-2-oxobutanoate + (6R)-5,10-methylene-5,6,7,8-tetrahydrofolate + H2O = 2-dehydropantoate + (6S)-5,6,7,8-tetrahydrofolate. It participates in cofactor biosynthesis; (R)-pantothenate biosynthesis; (R)-pantoate from 3-methyl-2-oxobutanoate: step 1/2. Functionally, catalyzes the reversible reaction in which hydroxymethyl group from 5,10-methylenetetrahydrofolate is transferred onto alpha-ketoisovalerate to form ketopantoate. This Halorhodospira halophila (strain DSM 244 / SL1) (Ectothiorhodospira halophila (strain DSM 244 / SL1)) protein is 3-methyl-2-oxobutanoate hydroxymethyltransferase.